Here is a 226-residue protein sequence, read N- to C-terminus: MIKTILKNSYIQKEITTHSATVIFSHGLGDSGAGWIEVMEEIQSRNNGHIRFICPNAPIQAVTLNGGFKMPSWYDIKSLSSRGDEDPAQVDESKNIIETIIKHEMEEEKIPAERIIIGGFSQGAALSLYTFYSQTETKLGGCIALSGYLPLATKFVANSLNKEQPLLMIHGDCDQVVRHQWGKLSFDHLKSQGINGEFITLKGLGHHSSPEEIDLMTKFISKTLPK.

Catalysis depends on charge relay system residues Ser-121, Asp-174, and His-206.

This sequence belongs to the AB hydrolase superfamily. AB hydrolase 2 family.

The protein localises to the cytoplasm. It localises to the nucleus. It carries out the reaction S-hexadecanoyl-L-cysteinyl-[protein] + H2O = L-cysteinyl-[protein] + hexadecanoate + H(+). In terms of biological role, hydrolyzes fatty acids from S-acylated cysteine residues in proteins with a strong preference for palmitoylated G-alpha proteins over other acyl substrates. Mediates the deacylation of G-alpha proteins such as GPA1 in vivo, but has weak or no activity toward palmitoylated Ras proteins. Has weak lysophospholipase activity in vitro; however such activity may not exist in vivo. This is Acyl-protein thioesterase 1 homolog 1 from Dictyostelium discoideum (Social amoeba).